The chain runs to 394 residues: Glutamyl-tRNA reductase (394 aa).

Substrate contacts are provided by residues 45–48, Ser99, 104–106, and Gln110; these read TCNR and EEQ. Cys46 serves as the catalytic Nucleophile. Residue 175 to 180 coordinates NADP(+); that stretch reads GLGNIG.

This sequence belongs to the glutamyl-tRNA reductase family. As to quaternary structure, homodimer.

It catalyses the reaction (S)-4-amino-5-oxopentanoate + tRNA(Glu) + NADP(+) = L-glutamyl-tRNA(Glu) + NADPH + H(+). Its pathway is porphyrin-containing compound metabolism; protoporphyrin-IX biosynthesis; 5-aminolevulinate from L-glutamyl-tRNA(Glu): step 1/2. Catalyzes the NADPH-dependent reduction of glutamyl-tRNA(Glu) to glutamate 1-semialdehyde (GSA). The chain is Glutamyl-tRNA reductase from Caldicellulosiruptor saccharolyticus (strain ATCC 43494 / DSM 8903 / Tp8T 6331).